The following is an 887-amino-acid chain: ATP-dependent DNA helicase srs2 (887 aa).

The 296-residue stretch at 9 to 304 (KFLNEEQRIS…LHLERNYRSA (296 aa)) folds into the UvrD-like helicase ATP-binding domain. ATP is bound by residues 33–38 (GSGKTR) and arginine 302. The 293-residue stretch at 305 to 597 (KPILELALSI…TISTLHAAKG (293 aa)) folds into the UvrD-like helicase C-terminal domain.

This sequence belongs to the helicase family. UvrD subfamily.

Its subcellular location is the nucleus. The enzyme catalyses Couples ATP hydrolysis with the unwinding of duplex DNA by translocating in the 3'-5' direction.. It carries out the reaction ATP + H2O = ADP + phosphate + H(+). ATP-dependent DNA helicase involved in DNA repair at least for UV-induced lesions. Also aids the recombinational repair of camptothecin-induced collapsed replication forks. The protein is ATP-dependent DNA helicase srs2 (srs2) of Schizosaccharomyces pombe (strain 972 / ATCC 24843) (Fission yeast).